Reading from the N-terminus, the 147-residue chain is UPF0306 protein YhbP (147 aa).

The protein belongs to the UPF0306 family.

The protein is UPF0306 protein YhbP of Escherichia coli O7:K1 (strain IAI39 / ExPEC).